A 172-amino-acid polypeptide reads, in one-letter code: Large ribosomal subunit protein uL5 (172 aa).

It belongs to the universal ribosomal protein uL5 family. Component of the large ribosomal subunit.

It is found in the nucleus. The protein localises to the cytoplasm. In terms of biological role, component of the ribosome, a large ribonucleoprotein complex responsible for the synthesis of proteins in the cell. The small ribosomal subunit (SSU) binds messenger RNAs (mRNAs) and translates the encoded message by selecting cognate aminoacyl-transfer RNA (tRNA) molecules. The large subunit (LSU) contains the ribosomal catalytic site termed the peptidyl transferase center (PTC), which catalyzes the formation of peptide bonds, thereby polymerizing the amino acids delivered by tRNAs into a polypeptide chain. The nascent polypeptides leave the ribosome through a tunnel in the LSU and interact with protein factors that function in enzymatic processing, targeting, and the membrane insertion of nascent chains at the exit of the ribosomal tunnel. The protein is Large ribosomal subunit protein uL5 (RPL11) of Tetrahymena thermophila.